The sequence spans 334 residues: Anthranilate phosphoribosyltransferase (334 aa).

5-phospho-alpha-D-ribose 1-diphosphate contacts are provided by residues glycine 79, 82–83 (GD), serine 87, 89–92 (NIST), 107–115 (KHGNRSISS), and serine 119. Glycine 79 serves as a coordination point for anthranilate. Residue serine 91 coordinates Mg(2+). Anthranilate is bound at residue asparagine 110. An anthranilate-binding site is contributed by arginine 165. 2 residues coordinate Mg(2+): aspartate 224 and glutamate 225.

Belongs to the anthranilate phosphoribosyltransferase family. In terms of assembly, homodimer. It depends on Mg(2+) as a cofactor.

The enzyme catalyses N-(5-phospho-beta-D-ribosyl)anthranilate + diphosphate = 5-phospho-alpha-D-ribose 1-diphosphate + anthranilate. Its pathway is amino-acid biosynthesis; L-tryptophan biosynthesis; L-tryptophan from chorismate: step 2/5. Functionally, catalyzes the transfer of the phosphoribosyl group of 5-phosphorylribose-1-pyrophosphate (PRPP) to anthranilate to yield N-(5'-phosphoribosyl)-anthranilate (PRA). This chain is Anthranilate phosphoribosyltransferase, found in Streptococcus pneumoniae (strain ATCC 700669 / Spain 23F-1).